Here is a 214-residue protein sequence, read N- to C-terminus: Dimethylamine corrinoid protein 2 (214 aa).

The B12-binding N-terminal domain maps to 1–91 (MATKEELIQE…DMPAGAATKK (91 aa)). The 123-residue stretch at 92–214 (LGVIVNGTVE…AVAKAKELLL (123 aa)) folds into the B12-binding domain. Methylcob(III)alamin is bound at residue H105.

This sequence belongs to the methylamine corrinoid protein family.

Its pathway is one-carbon metabolism; methanogenesis from dimethylamine. Its function is as follows. Acts as a methyl group carrier between MtbB and MtbA. The polypeptide is Dimethylamine corrinoid protein 2 (mtbC2) (Methanosarcina mazei (strain ATCC BAA-159 / DSM 3647 / Goe1 / Go1 / JCM 11833 / OCM 88) (Methanosarcina frisia)).